The primary structure comprises 395 residues: Beta-1,4-galactosyltransferase 3 (395 aa).

Residues 1–10 (MLRRLLERPC) lie on the Cytoplasmic side of the membrane. A helical; Signal-anchor for type II membrane protein membrane pass occupies residues 11–31 (TLALLVGSQLAVMMYLSLGGF). Topologically, residues 32–395 (RSLSALFGRD…ANHTAPRGSH (364 aa)) are lumenal. An N-linked (GlcNAc...) asparagine glycan is attached at asparagine 57. Cysteine 79 and cysteine 121 form a disulfide bridge. 132–136 (PHRAR) contacts UDP-alpha-D-galactose. Asparagine 168 carries an N-linked (GlcNAc...) asparagine glycan. UDP-alpha-D-galactose is bound by residues 171 to 173 (FNR), 198 to 199 (VD), tyrosine 228, and tryptophan 260. Cysteine 192 and cysteine 211 are oxidised to a cystine. Aspartate 199 serves as a coordination point for Mn(2+). An N-acetyl-D-glucosamine-binding site is contributed by 262-265 (GEDD). Residue histidine 293 coordinates Mn(2+). 293-295 (HRG) is a binding site for UDP-alpha-D-galactose. Arginine 305 is a binding site for N-acetyl-D-glucosamine. An N-linked (GlcNAc...) asparagine glycan is attached at asparagine 339. A disordered region spans residues 340 to 395 (ITADIGTDPRGPRSPSGPRYPPGSSQAFRQEMLQRRPPARPGPLPTANHTAPRGSH). Over residues 352–364 (RSPSGPRYPPGSS) the composition is skewed to low complexity. Residue asparagine 387 is glycosylated (N-linked (GlcNAc...) asparagine).

Belongs to the glycosyltransferase 7 family. Requires Mn(2+) as cofactor.

The protein resides in the golgi apparatus. Its subcellular location is the golgi stack membrane. It catalyses the reaction an N-acetyl-beta-D-glucosaminyl derivative + UDP-alpha-D-galactose = a beta-D-galactosyl-(1-&gt;4)-N-acetyl-beta-D-glucosaminyl derivative + UDP + H(+). The catalysed reaction is N-acetyl-D-glucosamine + UDP-alpha-D-galactose = beta-D-galactosyl-(1-&gt;4)-N-acetyl-D-glucosamine + UDP + H(+). The enzyme catalyses a beta-D-GlcNAc-(1-&gt;3)-beta-D-Gal-(1-&gt;4)-beta-D-Glc-(1&lt;-&gt;1)-Cer(d18:1(4E)) + UDP-alpha-D-galactose = a neolactoside nLc4Cer(d18:1(4E)) + UDP + H(+). It carries out the reaction a beta-D-glucosylceramide + UDP-alpha-D-galactose = a beta-D-galactosyl-(1-&gt;4)-beta-D-glucosyl-(1&lt;-&gt;1)-ceramide + UDP + H(+). It catalyses the reaction a neolactoside IV(3)-beta-GlcNAc-nLc4Cer + UDP-alpha-D-galactose = a neolactoside nLc6Cer + UDP + H(+). It participates in protein modification; protein glycosylation. Functionally, responsible for the synthesis of complex-type N-linked oligosaccharides in many glycoproteins as well as the carbohydrate moieties of glycolipids. This chain is Beta-1,4-galactosyltransferase 3, found in Mus musculus (Mouse).